Reading from the N-terminus, the 211-residue chain is Uracil phosphoribosyltransferase (211 aa).

5-phospho-alpha-D-ribose 1-diphosphate is bound by residues R81, R106, and 133-141 (DPMLATGNS). Residues I196 and 201–203 (GDA) each bind uracil. Residue D202 coordinates 5-phospho-alpha-D-ribose 1-diphosphate.

It belongs to the UPRTase family. Requires Mg(2+) as cofactor.

It carries out the reaction UMP + diphosphate = 5-phospho-alpha-D-ribose 1-diphosphate + uracil. Its pathway is pyrimidine metabolism; UMP biosynthesis via salvage pathway; UMP from uracil: step 1/1. With respect to regulation, allosterically activated by GTP. Catalyzes the conversion of uracil and 5-phospho-alpha-D-ribose 1-diphosphate (PRPP) to UMP and diphosphate. The sequence is that of Uracil phosphoribosyltransferase from Myxococcus xanthus (strain DK1622).